A 466-amino-acid polypeptide reads, in one-letter code: Reticulophagy regulator 3 (466 aa).

A disordered region spans residues 1–28; the sequence is MAEAEGVPTTPGPASGSTFRGRRDVSGS. Alanine 2 carries the N-acetylalanine modification. The Cytoplasmic segment spans residues 2–80; sequence AEAEGVPTTP…WCLGLNAAFW (79 aa). A Phosphothreonine modification is found at threonine 10. Residue serine 26 is modified to Phosphoserine. A helical transmembrane segment spans residues 81 to 101; it reads FFALTSLRLVFLLAFGLMIIV. At 102–163 the chain is on the lumenal side; it reads CIDQWKNKIW…FIRNVLLFKK (62 aa). Residues 164–184 traverse the membrane as a helical segment; the sequence is QNPGKFCLLSCGILTFLAVLG. Topologically, residues 185–186 are cytoplasmic; sequence RY. The helical transmembrane segment at 187–207 threads the bilayer; the sequence is VPGLLLSYLMLVTVMMWPLAV. At 208–381 the chain is on the lumenal side; it reads YHRLWDRAYV…ASRDEAALPE (174 aa). Residues serine 258 and serine 260 each carry the phosphoserine modification. Threonine 283 carries the post-translational modification Phosphothreonine. The segment at 284-374 is disordered; it reads DSEHSDAEVS…EEPQAPPASR (91 aa). A phosphoserine mark is found at serine 285, serine 288, serine 293, and serine 303. Polar residues predominate over residues 294-310; sequence CTDNGTFNLSRGQTPLT. Threonine 307 and threonine 310 each carry phosphothreonine. Phosphoserine occurs at positions 313, 320, and 360. A compositionally biased stretch (basic and acidic residues) spans 316 to 331; the sequence is LDGHSDPEESFARDLP. The chain crosses the membrane as a helical span at residues 382-402; it reads LLLGALPVGSNLTSNLASLVS. Topologically, residues 403 to 466 are cytoplasmic; that stretch reads QGMIQLALSG…QLDPASSRSH (64 aa). Residues 412–466 form a disordered region; sequence GASQPGPSGAPAQRATRGFLRSPSSDLDTDAEGDDFELLDQSELSQLDPASSRSH. The span at 438 to 451 shows a compositional bias: acidic residues; it reads LDTDAEGDDFELLD. Residue threonine 440 is modified to Phosphothreonine. Positions 445 to 450 match the LIR motif motif; it reads DDFELL. The span at 453–466 shows a compositional bias: polar residues; the sequence is SELSQLDPASSRSH.

It belongs to the RETREG family. In terms of assembly, interacts with ATG8 family modifier proteins MAP1LC3A, MAP1LC3B, MAP1LC3C, GABARAP, GABARAPL1 and GABARAPL2. Interacts with CANX. Interacts with RTN4 isoform B.

It is found in the endoplasmic reticulum membrane. In terms of biological role, endoplasmic reticulum (ER)-anchored autophagy regulator which exists in an inactive state under basal conditions but is activated following cellular stress. When activated, induces ER fragmentation and mediates ER delivery into lysosomes through sequestration into autophagosomes via interaction with ATG8 family proteins. Promotes ER membrane curvature and ER tubulation required for subsequent ER fragmentation and engulfment into autophagosomes. Required for collagen quality control in a LIR motif-dependent manner. Mediates NRF1-enhanced neurite outgrowth. The sequence is that of Reticulophagy regulator 3 from Homo sapiens (Human).